A 324-amino-acid chain; its full sequence is uncharacterized protein (324 aa).

It to the C-terminal of para-aminobenzoate synthase component I.

This is an uncharacterized protein from Pasteurella multocida (strain Pm70).